A 372-amino-acid polypeptide reads, in one-letter code: Peptidyl-prolyl cis-trans isomerase D (372 aa).

The region spanning 9–175 is the PPIase cyclophilin-type domain; sequence FFDISIGGKP…KEVKIEDCGV (167 aa). TPR repeat units follow at residues 220–253, 271–304, and 309–342; these read VEAVKEIGTKQFKEKNFEVALVKYEKSSQMLKQY, VSLFLNIALVSLKSKNYSRTLSAATEALHADNTD, and AKALYRRGLAYYYTKNAEMAVTDLELATTYQPHD.

This sequence belongs to the cyclophilin-type PPIase family. PPIase D subfamily.

It localises to the cytoplasm. The catalysed reaction is [protein]-peptidylproline (omega=180) = [protein]-peptidylproline (omega=0). Functionally, PPIases accelerate the folding of proteins. It catalyzes the cis-trans isomerization of proline imidic peptide bonds in oligopeptides. The chain is Peptidyl-prolyl cis-trans isomerase D (CPR6) from Kluyveromyces lactis (strain ATCC 8585 / CBS 2359 / DSM 70799 / NBRC 1267 / NRRL Y-1140 / WM37) (Yeast).